We begin with the raw amino-acid sequence, 317 residues long: MWFYLVTLVGLYHLLRWYRERQVVSHLQDKYVFITGCDSGFGNLLARQLDRRGMRVLAACLTEKGAEELRNKTSDRLETVILDVTKTESIVAATQWVKERVGDRGLWGLVNNAGVLQPFAYIEWYRPEDYMPIFQVNLIGLTQVTISMLFLVKKARGRIVNVSSALGRVALFGGFYSCSKYGVEAFSDVLRHEVQDFGVKVSIIEPGSFKTEMTDAELTIERTKKVWEAAPEHIKESYGQQFFDDFCSTTKRELMKCSRNLSLVTDCMEHALTSTHPRTRYSAGWDAKFFFIPLSYLPASLVDYLLAISRGKPAQAA.

The first 17 residues, 1 to 17, serve as a signal peptide directing secretion; sequence MWFYLVTLVGLYHLLRW. Position 33 to 57 (33 to 57) interacts with NAD(+); that stretch reads FITGCDSGFGNLLARQLDRRGMRVL. Residues Asn-71 and Asn-161 are each glycosylated (N-linked (GlcNAc...) asparagine). Ser-164 provides a ligand contact to substrate. The active-site Proton acceptor is Tyr-176.

Belongs to the short-chain dehydrogenases/reductases (SDR) family. Detected in liver.

The protein resides in the microsome membrane. It is found in the early endosome membrane. It catalyses the reaction all-trans-retinol--[retinol-binding protein] + NAD(+) = all-trans-retinal--[retinol-binding protein] + NADH + H(+). The catalysed reaction is all-trans-retinol + NAD(+) = all-trans-retinal + NADH + H(+). It carries out the reaction androsterone + NAD(+) = 5alpha-androstan-3,17-dione + NADH + H(+). The enzyme catalyses testosterone + NAD(+) = androst-4-ene-3,17-dione + NADH + H(+). It catalyses the reaction 5alpha-androstane-3alpha,17beta-diol + NAD(+) = 17beta-hydroxy-5alpha-androstan-3-one + NADH + H(+). The catalysed reaction is 17beta-estradiol + NAD(+) = estrone + NADH + H(+). It carries out the reaction 17beta-estradiol + NADP(+) = estrone + NADPH + H(+). The enzyme catalyses 3alpha-hydroxy-5alpha-pregnan-20-one + NAD(+) = 5alpha-pregnane-3,20-dione + NADH + H(+). It catalyses the reaction 5alpha-androstane-3beta,17beta-diol + NAD(+) = 17beta-hydroxy-5alpha-androstan-3-one + NADH + H(+). The catalysed reaction is 3beta-hydroxy-5alpha-androstan-17-one + NAD(+) = 5alpha-androstan-3,17-dione + NADH + H(+). With respect to regulation, inhibited by carbenoxolone and phenyl arsenoxide. Functionally, NAD-dependent oxidoreductase with broad substrate specificity that shows both oxidative and reductive activity (in vitro). Has 17-beta-hydroxysteroid dehydrogenase activity towards various steroids (in vitro). Converts 5-alpha-androstan-3-alpha,17-beta-diol to androsterone and estradiol to estrone (in vitro). Has 3-alpha-hydroxysteroid dehydrogenase activity towards androsterone (in vitro). Has retinol dehydrogenase activity towards all-trans-retinol (in vitro). The polypeptide is 17-beta-hydroxysteroid dehydrogenase type 6 (Hsd17b6) (Mus musculus (Mouse)).